Reading from the N-terminus, the 78-residue chain is uncharacterized protein (78 aa).

An N-terminal signal peptide occupies residues 1-22; sequence MFKKSVLFATLLSGVMAFSTNA.

This sequence belongs to the BhsA/McbA family.

It is found in the periplasm. In terms of biological role, probably involved in reactive chlorine species (RCS) stress resistance. This is an uncharacterized protein from Escherichia coli (strain K12).